A 236-amino-acid polypeptide reads, in one-letter code: UPF0257 lipoprotein YnfC (236 aa).

Positions 1–16 (MKKPLLLTLLCMILAG) are cleaved as a signal peptide. Residue Cys-17 is the site of N-palmitoyl cysteine attachment. The S-diacylglycerol cysteine moiety is linked to residue Cys-17.

The protein belongs to the UPF0257 family.

It is found in the cell membrane. The chain is UPF0257 lipoprotein YnfC from Salmonella schwarzengrund (strain CVM19633).